Here is a 115-residue protein sequence, read N- to C-terminus: MATETFARLRFARISPQKCRLVADQIRGMPVERALQELTFSPKKGAAIVKKVLESAIANAEHNEGADVDELKVSQIYIDQGPTLKRIHARAKGRANRILKRTSHITVAVGEKVKG.

The protein belongs to the universal ribosomal protein uL22 family. As to quaternary structure, part of the 50S ribosomal subunit.

Functionally, this protein binds specifically to 23S rRNA; its binding is stimulated by other ribosomal proteins, e.g. L4, L17, and L20. It is important during the early stages of 50S assembly. It makes multiple contacts with different domains of the 23S rRNA in the assembled 50S subunit and ribosome. In terms of biological role, the globular domain of the protein is located near the polypeptide exit tunnel on the outside of the subunit, while an extended beta-hairpin is found that lines the wall of the exit tunnel in the center of the 70S ribosome. This is Large ribosomal subunit protein uL22 from Thioalkalivibrio sulfidiphilus (strain HL-EbGR7).